The following is a 194-amino-acid chain: Peptidyl-tRNA hydrolase (194 aa).

Tyr16 contacts tRNA. His21 serves as the catalytic Proton acceptor. Positions 67, 69, and 115 each coordinate tRNA.

The protein belongs to the PTH family. In terms of assembly, monomer.

It is found in the cytoplasm. The enzyme catalyses an N-acyl-L-alpha-aminoacyl-tRNA + H2O = an N-acyl-L-amino acid + a tRNA + H(+). Hydrolyzes ribosome-free peptidyl-tRNAs (with 1 or more amino acids incorporated), which drop off the ribosome during protein synthesis, or as a result of ribosome stalling. In terms of biological role, catalyzes the release of premature peptidyl moieties from peptidyl-tRNA molecules trapped in stalled 50S ribosomal subunits, and thus maintains levels of free tRNAs and 50S ribosomes. The sequence is that of Peptidyl-tRNA hydrolase from Escherichia coli O17:K52:H18 (strain UMN026 / ExPEC).